The chain runs to 245 residues: Probable phosphatase YPTB2019 (245 aa).

Zn(2+)-binding residues include His7, His9, His15, His40, Glu73, His101, His131, Asp192, and His194.

It belongs to the PHP family. As to quaternary structure, homotrimer. Requires Zn(2+) as cofactor.

The protein is Probable phosphatase YPTB2019 of Yersinia pseudotuberculosis serotype I (strain IP32953).